Reading from the N-terminus, the 113-residue chain is Cell cycle protein GpsB (113 aa).

The stretch at 32–70 (LDSVIKDYENFGKEIERMKNENDRLTDKVDELNKQVSAG) forms a coiled coil.

Belongs to the GpsB family. In terms of assembly, forms polymers through the coiled coil domains. Interacts with PBP1, MreC and EzrA.

It is found in the cytoplasm. In terms of biological role, divisome component that associates with the complex late in its assembly, after the Z-ring is formed, and is dependent on DivIC and PBP2B for its recruitment to the divisome. Together with EzrA, is a key component of the system that regulates PBP1 localization during cell cycle progression. Its main role could be the removal of PBP1 from the cell pole after pole maturation is completed. Also contributes to the recruitment of PBP1 to the division complex. Not essential for septum formation. The chain is Cell cycle protein GpsB from Pediococcus pentosaceus (strain ATCC 25745 / CCUG 21536 / LMG 10740 / 183-1w).